The chain runs to 449 residues: Phosphoglucosamine mutase (449 aa).

Ser-101 (phosphoserine intermediate) is an active-site residue. Ser-101, Asp-241, Asp-243, and Asp-245 together coordinate Mg(2+). Residue Ser-101 is modified to Phosphoserine.

This sequence belongs to the phosphohexose mutase family. Mg(2+) serves as cofactor. Activated by phosphorylation.

It carries out the reaction alpha-D-glucosamine 1-phosphate = D-glucosamine 6-phosphate. Functionally, catalyzes the conversion of glucosamine-6-phosphate to glucosamine-1-phosphate. This chain is Phosphoglucosamine mutase, found in Alkaliphilus oremlandii (strain OhILAs) (Clostridium oremlandii (strain OhILAs)).